Reading from the N-terminus, the 579-residue chain is MVSKIRTFGWVQNPGKFENLKRVVQVFDRNSKVHNEVKNIKIPTLVKESKIQKELVAIMNQHDLIYTYKELVGTGTSIRSEAPCDAIIQATIADQGNKKGYIDNWSSDGFLRWAHALGFIEYINKSDSFVITDVGLAYSKSADGSAIEKEILIEAISSYPPAIRILTLLEDGQHLTKFDLGKNLGFSGESGFTSLPEGILLDTLANAMPKDKGEIRNNWEGSSDKYARMIGGWLDKLGLVKQGKKEFIIPTLGKPDNKEFISHAFKITGEGLKVLRRAKGSTKFTRVPKRVYWEMLATNLTDKEYVRTRRALILEILIKAGSLKIEQIQDNLKKLGFDEVIETIENDIKGLINTGIFIEIKGRFYQLKDHILQFVIPNRGVTKQLVKSELEEKKSELRHKLKYVPHEYIELIEIARNSTQDRILEMKVMEFFMKVYGYRGKHLGGSRKPDGAIYTVGSPIDYGVIVDTKAYSGGYNLPIGQADEMQRYVEENQTRNKHINPNEWWKVYPSSVTEFKFLFVSGHFKGNYKAQLTRLNHITNCNGAVLSVEELLIGGEMIKAGTLTLEEVRRKFNNGEINF.

Active-site residues include Asp-450, Asp-467, and Lys-469.

Monomer, in which form it can cleave DNA. Homodimer when bound to DNA. The cofactor is Mg(2+).

The enzyme catalyses Endonucleolytic cleavage of DNA to give specific double-stranded fragments with terminal 5'-phosphates.. Functionally, an S subtype restriction enzyme that recognizes the asymmetric double-stranded sequence 5'-GGATG-3' and cleaves respectively 14 bases after G-1 (top strand) and 13 bases before C-1 (bottom strand). The chain is Type II restriction enzyme FokI from Planomicrobium okeanokoites (Planococcus okeanokoites).